Reading from the N-terminus, the 209-residue chain is Nucleoside triphosphate pyrophosphatase (209 aa).

Catalysis depends on Asp79, which acts as the Proton acceptor.

Belongs to the Maf family. The cofactor is a divalent metal cation.

The protein resides in the cytoplasm. It catalyses the reaction a ribonucleoside 5'-triphosphate + H2O = a ribonucleoside 5'-phosphate + diphosphate + H(+). It carries out the reaction a 2'-deoxyribonucleoside 5'-triphosphate + H2O = a 2'-deoxyribonucleoside 5'-phosphate + diphosphate + H(+). Nucleoside triphosphate pyrophosphatase. May have a dual role in cell division arrest and in preventing the incorporation of modified nucleotides into cellular nucleic acids. In Mycolicibacterium vanbaalenii (strain DSM 7251 / JCM 13017 / BCRC 16820 / KCTC 9966 / NRRL B-24157 / PYR-1) (Mycobacterium vanbaalenii), this protein is Nucleoside triphosphate pyrophosphatase.